The primary structure comprises 215 residues: Pyrrolidone-carboxylate peptidase (215 aa).

Residues Glu80, Cys143, and His167 contribute to the active site.

The protein belongs to the peptidase C15 family. As to quaternary structure, homotetramer.

It is found in the cytoplasm. The catalysed reaction is Release of an N-terminal pyroglutamyl group from a polypeptide, the second amino acid generally not being Pro.. Its function is as follows. Removes 5-oxoproline from various penultimate amino acid residues except L-proline. This is Pyrrolidone-carboxylate peptidase from Bacillus cereus (strain ATCC 14579 / DSM 31 / CCUG 7414 / JCM 2152 / NBRC 15305 / NCIMB 9373 / NCTC 2599 / NRRL B-3711).